A 192-amino-acid chain; its full sequence is Pyridoxal 5'-phosphate synthase subunit PdxT (192 aa).

Position 53–55 (53–55 (GES)) interacts with L-glutamine. C82 functions as the Nucleophile in the catalytic mechanism. L-glutamine is bound by residues R109 and 137 to 138 (IR). Residues H173 and E175 each act as charge relay system in the active site.

It belongs to the glutaminase PdxT/SNO family. In terms of assembly, in the presence of PdxS, forms a dodecamer of heterodimers. Only shows activity in the heterodimer.

The enzyme catalyses aldehydo-D-ribose 5-phosphate + D-glyceraldehyde 3-phosphate + L-glutamine = pyridoxal 5'-phosphate + L-glutamate + phosphate + 3 H2O + H(+). The catalysed reaction is L-glutamine + H2O = L-glutamate + NH4(+). It participates in cofactor biosynthesis; pyridoxal 5'-phosphate biosynthesis. Its function is as follows. Catalyzes the hydrolysis of glutamine to glutamate and ammonia as part of the biosynthesis of pyridoxal 5'-phosphate. The resulting ammonia molecule is channeled to the active site of PdxS. This Methanoculleus marisnigri (strain ATCC 35101 / DSM 1498 / JR1) protein is Pyridoxal 5'-phosphate synthase subunit PdxT.